The sequence spans 601 residues: Elongation factor 4 (601 aa).

The region spanning 8 to 189 (EQIRNFGIIA…LIVRKAPPPK (182 aa)) is the tr-type G domain. Position 20-25 (20-25 (DHGKST)) interacts with GTP.

This sequence belongs to the TRAFAC class translation factor GTPase superfamily. Classic translation factor GTPase family. LepA subfamily.

Its subcellular location is the cell membrane. The catalysed reaction is GTP + H2O = GDP + phosphate + H(+). Required for accurate and efficient protein synthesis under certain stress conditions. May act as a fidelity factor of the translation reaction, by catalyzing a one-codon backward translocation of tRNAs on improperly translocated ribosomes. Back-translocation proceeds from a post-translocation (POST) complex to a pre-translocation (PRE) complex, thus giving elongation factor G a second chance to translocate the tRNAs correctly. Binds to ribosomes in a GTP-dependent manner. The polypeptide is Elongation factor 4 (Tropheryma whipplei (strain TW08/27) (Whipple's bacillus)).